Consider the following 455-residue polypeptide: Anaerobic glycerol-3-phosphate dehydrogenase subunit B (455 aa).

Belongs to the anaerobic G-3-P dehydrogenase subunit B family. Composed of a catalytic GlpA/B dimer and of membrane bound GlpC. FMN serves as cofactor.

The catalysed reaction is a quinone + sn-glycerol 3-phosphate = dihydroxyacetone phosphate + a quinol. The protein operates within polyol metabolism; glycerol degradation via glycerol kinase pathway; glycerone phosphate from sn-glycerol 3-phosphate (anaerobic route): step 1/1. Conversion of glycerol 3-phosphate to dihydroxyacetone. Uses fumarate or nitrate as electron acceptor. This Aliivibrio fischeri (strain MJ11) (Vibrio fischeri) protein is Anaerobic glycerol-3-phosphate dehydrogenase subunit B.